The following is a 242-amino-acid chain: Ribonuclease PH (242 aa).

Phosphate is bound by residues Arg-87 and Ser-125–Arg-127.

The protein belongs to the RNase PH family. As to quaternary structure, homohexameric ring arranged as a trimer of dimers.

The enzyme catalyses tRNA(n+1) + phosphate = tRNA(n) + a ribonucleoside 5'-diphosphate. In terms of biological role, phosphorolytic 3'-5' exoribonuclease that plays an important role in tRNA 3'-end maturation. Removes nucleotide residues following the 3'-CCA terminus of tRNAs; can also add nucleotides to the ends of RNA molecules by using nucleoside diphosphates as substrates, but this may not be physiologically important. Probably plays a role in initiation of 16S rRNA degradation (leading to ribosome degradation) during starvation. The chain is Ribonuclease PH from Synechococcus sp. (strain JA-3-3Ab) (Cyanobacteria bacterium Yellowstone A-Prime).